Reading from the N-terminus, the 95-residue chain is Small ribosomal subunit protein bS6 (95 aa).

This sequence belongs to the bacterial ribosomal protein bS6 family.

Binds together with bS18 to 16S ribosomal RNA. In Corynebacterium jeikeium (strain K411), this protein is Small ribosomal subunit protein bS6.